Reading from the N-terminus, the 297-residue chain is Glutamyl-Q tRNA(Asp) synthetase (297 aa).

L-glutamate-binding positions include 9 to 13 and Glu45; that span reads RFAPS. The short motif at 12 to 22 is the 'HIGH' region element; that stretch reads PSPTGPLHFGS. 3 residues coordinate Zn(2+): Cys101, Cys103, and Cys118. L-glutamate is bound by residues Tyr170 and Arg188. A 'KMSKS' region motif is present at residues 226–230; sequence KLSKS. Lys229 is an ATP binding site.

The protein belongs to the class-I aminoacyl-tRNA synthetase family. GluQ subfamily. Requires Zn(2+) as cofactor.

Its function is as follows. Catalyzes the tRNA-independent activation of glutamate in presence of ATP and the subsequent transfer of glutamate onto a tRNA(Asp). Glutamate is transferred on the 2-amino-5-(4,5-dihydroxy-2-cyclopenten-1-yl) moiety of the queuosine in the wobble position of the QUC anticodon. The polypeptide is Glutamyl-Q tRNA(Asp) synthetase (Xanthomonas campestris pv. campestris (strain 8004)).